A 713-amino-acid chain; its full sequence is Glycine--tRNA ligase beta subunit (713 aa).

It belongs to the class-II aminoacyl-tRNA synthetase family. As to quaternary structure, tetramer of two alpha and two beta subunits.

The protein localises to the cytoplasm. The catalysed reaction is tRNA(Gly) + glycine + ATP = glycyl-tRNA(Gly) + AMP + diphosphate. The sequence is that of Glycine--tRNA ligase beta subunit from Picosynechococcus sp. (strain ATCC 27264 / PCC 7002 / PR-6) (Agmenellum quadruplicatum).